A 385-amino-acid polypeptide reads, in one-letter code: GPN-loop GTPase 1 (385 aa).

Residue 13–18 (GSGKTT) participates in GTP binding. A Gly-Pro-Asn (GPN)-loop; involved in dimer interface motif is present at residues 70–72 (GPN). 173-176 (NKTD) is a binding site for GTP. S304, S308, and S313 each carry phosphoserine. Residues 317–332 (EDANDGLVDRDEDEGV) are compositionally biased toward acidic residues. The tract at residues 317-356 (EDANDGLVDRDEDEGVEREYTFPGEERTKGEVNENSAPDL) is disordered. Basic and acidic residues predominate over residues 333 to 348 (EREYTFPGEERTKGEV). S352 carries the post-translational modification Phosphoserine. A Glycyl lysine isopeptide (Lys-Gly) (interchain with G-Cter in ubiquitin) cross-link involves residue K369.

The protein belongs to the GPN-loop GTPase family. Heterodimers with GPN2 or GPN3. Binds to RNA polymerase II (RNAPII) in a GTP-dependent manner. Interacts with nuclear pore protein NUP133 and nuclear export factor CRM1. Interacts with PCL1. Phosphorylated by the cyclin-CDK PCL1-PHO85.

The protein resides in the cytoplasm. Functionally, small GTPase required for proper nuclear import of RNA polymerase II (RNAPII). May act at an RNAP assembly step prior to nuclear import. Promotes sister chromatid separation during anaphase. This is GPN-loop GTPase 1 from Saccharomyces cerevisiae (strain ATCC 204508 / S288c) (Baker's yeast).